Consider the following 174-residue polypeptide: Amino-acid acetyltransferase (174 aa).

In terms of domain architecture, N-acetyltransferase spans 10–148 (PVVRRARTSD…VFDEMCRSYD (139 aa)).

This sequence belongs to the acetyltransferase family. As to quaternary structure, homodimer and homotetramer.

The enzyme catalyses L-glutamate + acetyl-CoA = N-acetyl-L-glutamate + CoA + H(+). Its pathway is amino-acid biosynthesis; L-arginine biosynthesis; N(2)-acetyl-L-ornithine from L-glutamate: step 1/4. Its activity is regulated as follows. Inhibited by L-arginine. Catalyzes the conversion of L-glutamate to alpha-N-acetyl-L-glutamate. L-glutamine is a significantly better substrate compared to L-glutamate. In Mycobacterium tuberculosis (strain ATCC 25618 / H37Rv), this protein is Amino-acid acetyltransferase (argA).